The sequence spans 893 residues: Probable ion channel CASTOR (893 aa).

The disordered stretch occupies residues 1–94; that stretch reads MPLDPDSSPA…APRRRDPRYA (94 aa). The span at 65 to 85 shows a compositional bias: pro residues; the sequence is PLPPPEQQKQQQPPPTTPPPA. Residues 132 to 152 traverse the membrane as a helical segment; sequence TLRWSGMVSVAAIVLCFSSLV. Residues 156–178 adopt a coiled-coil conformation; the sequence is SSLHDQVHHLKAQLAEATTKLQS. The next 3 membrane-spanning stretches (helical) occupy residues 210–230, 266–286, and 318–338; these read LLLSLSTLYAPLLILKYMDLF, LVLLVATLLLIGLGGLALYGV, and LVSVSISIGGMLVFAMMLGLV. RCK N-terminal domains are found at residues 359 to 500 and 619 to 792; these read QSHT…ETVV and PERI…DYVL. A coiled-coil region spans residues 389–415; the sequence is TIVVMAEKDKEEMEADIAKMEFDLKGT.

The protein belongs to the castor/pollux (TC 1.A.1.23) family. As to expression, expressed in roots, leaves, stems and panicles.

The protein resides in the nucleus membrane. Required for mycorrhizal symbiosis. This Oryza sativa subsp. japonica (Rice) protein is Probable ion channel CASTOR.